A 228-amino-acid chain; its full sequence is Death domain-containing membrane protein NRADD (228 aa).

Over 1–52 the chain is Extracellular; that stretch reads MLHNVSKGVVYSDTALKGQDGDREGMWVGAGGALAPNTSSLFPPEPPGASSN. N4 and N37 each carry an N-linked (GlcNAc...) asparagine glycan. The helical; Signal-anchor for type III membrane protein transmembrane segment at 53–73 threads the bilayer; the sequence is IIPVYCALLATVVLGLLAYVA. The Cytoplasmic portion of the chain corresponds to 74-228; it reads FKCWRSRKQR…SSPAEGCSVV (155 aa). A Death domain is found at 143–222; that stretch reads EEVQRLLILG…DVVQVLSSPA (80 aa).

In terms of assembly, interacts with NTRK1. Isoform 1 and isoform 2 interact with NGFR. Interacts with SORT1. Isoform 1 is N-glycosylated. Isoform 2 is not N-glycosylated. In terms of tissue distribution, detected in embryo, including embryonic brain. Detected at very low levels in adult testis, spleen, thymus and lung.

Its subcellular location is the cell membrane. The protein localises to the nucleus. Its function is as follows. Modulates NTRK1 signaling. Can activate several intracellular signaling pathways, leading to activation of JUN. Promotes translocation of SORT1 to the cell membrane, and thereby hinders lysosomal degradation of SOTR1 and promotes its interaction with NGFR. Both isoform 1 and isoform 2 promote apoptosis. This is Death domain-containing membrane protein NRADD (Nradd) from Rattus norvegicus (Rat).